Reading from the N-terminus, the 658-residue chain is Endoplasmic reticulum mannosyl-oligosaccharide 1,2-alpha-mannosidase (658 aa).

At 1–50 (MYPPPAPPPAPHRDFISVTLSLGESYDNSKSRRRRSCWRKWKQLSRLQRN) the chain is on the cytoplasmic side. A helical; Signal-anchor for type II membrane protein transmembrane segment spans residues 51-71 (VILFVLGFLILCGFLYSLHTA). Residues 72–658 (DQWKALSGRP…AHPLPIWAPA (587 aa)) are Lumenal-facing. Ser-102 bears the Phosphoserine mark. Residues 123–142 (GPPHLQIRPPNTVSKDGMQD) are disordered. Glu-289 acts as the Proton donor in catalysis. Asp-422 is an active-site residue. Cys-486 and Cys-515 are disulfide-bonded. Residue Glu-529 is the Proton donor of the active site. Residue Glu-558 is part of the active site. Position 647 (Thr-647) interacts with Ca(2+).

Belongs to the glycosyl hydrolase 47 family. Ca(2+) serves as cofactor.

It is found in the endoplasmic reticulum membrane. It catalyses the reaction N(4)-(alpha-D-Man-(1-&gt;2)-alpha-D-Man-(1-&gt;2)-alpha-D-Man-(1-&gt;3)-[alpha-D-Man-(1-&gt;2)-alpha-D-Man-(1-&gt;3)-[alpha-D-Man-(1-&gt;2)-alpha-D-Man-(1-&gt;6)]-alpha-D-Man-(1-&gt;6)]-beta-D-Man-(1-&gt;4)-beta-D-GlcNAc-(1-&gt;4)-beta-D-GlcNAc)-L-asparaginyl-[protein] (N-glucan mannose isomer 9A1,2,3B1,2,3) + 4 H2O = N(4)-(alpha-D-Man-(1-&gt;3)-[alpha-D-Man-(1-&gt;3)-[alpha-D-Man-(1-&gt;6)]-alpha-D-Man-(1-&gt;6)]-beta-D-Man-(1-&gt;4)-beta-D-GlcNAc-(1-&gt;4)-beta-D-GlcNAc)-L-asparaginyl-[protein] (N-glucan mannose isomer 5A1,2) + 4 beta-D-mannose. It carries out the reaction N(4)-(alpha-D-Man-(1-&gt;2)-alpha-D-Man-(1-&gt;2)-alpha-D-Man-(1-&gt;3)-[alpha-D-Man-(1-&gt;3)-[alpha-D-Man-(1-&gt;2)-alpha-D-Man-(1-&gt;6)]-alpha-D-Man-(1-&gt;6)]-beta-D-Man-(1-&gt;4)-beta-D-GlcNAc-(1-&gt;4)-beta-D-GlcNAc)-L-asparaginyl-[protein] (N-glucan mannose isomer 8A1,2,3B1,3) + 3 H2O = N(4)-(alpha-D-Man-(1-&gt;3)-[alpha-D-Man-(1-&gt;3)-[alpha-D-Man-(1-&gt;6)]-alpha-D-Man-(1-&gt;6)]-beta-D-Man-(1-&gt;4)-beta-D-GlcNAc-(1-&gt;4)-beta-D-GlcNAc)-L-asparaginyl-[protein] (N-glucan mannose isomer 5A1,2) + 3 beta-D-mannose. Its pathway is protein modification; protein glycosylation. In terms of biological role, involved in glycoprotein quality control targeting of misfolded glycoproteins for degradation. It primarily trims a single alpha-1,2-linked mannose residue from Man(9)GlcNAc(2) to produce Man(8)GlcNAc(2), but at high enzyme concentrations, as found in the ER quality control compartment (ERQC), it further trims the carbohydrates to Man(5-6)GlcNAc(2). In Mus musculus (Mouse), this protein is Endoplasmic reticulum mannosyl-oligosaccharide 1,2-alpha-mannosidase (Man1b1).